Here is a 27-residue protein sequence, read N- to C-terminus: Superoxide dismutase [Mn] (27 aa).

Belongs to the iron/manganese superoxide dismutase family. In terms of assembly, homodimer. It depends on Mn(2+) as a cofactor.

It catalyses the reaction 2 superoxide + 2 H(+) = H2O2 + O2. Its function is as follows. Destroys superoxide anion radicals which are normally produced within the cells and which are toxic to biological systems. The protein is Superoxide dismutase [Mn] (sodA) of Desulfovibrio desulfuricans.